A 316-amino-acid chain; its full sequence is Biotin synthase (316 aa).

The Radical SAM core domain occupies 39–263 (NAIQCSTLLS…LFPKAYVRLS (225 aa)). Cys54, Cys58, and Cys61 together coordinate [4Fe-4S] cluster. The [2Fe-2S] cluster site is built by Cys98, Cys129, Cys189, and Arg261.

Belongs to the radical SAM superfamily. Biotin synthase family. In terms of assembly, homodimer. Requires [4Fe-4S] cluster as cofactor. The cofactor is [2Fe-2S] cluster.

The catalysed reaction is (4R,5S)-dethiobiotin + (sulfur carrier)-SH + 2 reduced [2Fe-2S]-[ferredoxin] + 2 S-adenosyl-L-methionine = (sulfur carrier)-H + biotin + 2 5'-deoxyadenosine + 2 L-methionine + 2 oxidized [2Fe-2S]-[ferredoxin]. It functions in the pathway cofactor biosynthesis; biotin biosynthesis; biotin from 7,8-diaminononanoate: step 2/2. Its function is as follows. Catalyzes the conversion of dethiobiotin (DTB) to biotin by the insertion of a sulfur atom into dethiobiotin via a radical-based mechanism. This is Biotin synthase from Acidithiobacillus ferrooxidans (strain ATCC 23270 / DSM 14882 / CIP 104768 / NCIMB 8455) (Ferrobacillus ferrooxidans (strain ATCC 23270)).